Reading from the N-terminus, the 219-residue chain is tRNA (guanine-N(7)-)-methyltransferase (219 aa).

Glu-51, Glu-76, Asp-103, and Asp-125 together coordinate S-adenosyl-L-methionine. Asp-125 is an active-site residue. Substrate-binding positions include Lys-129, Asp-161, and 199–202; that span reads TRYE.

This sequence belongs to the class I-like SAM-binding methyltransferase superfamily. TrmB family.

The catalysed reaction is guanosine(46) in tRNA + S-adenosyl-L-methionine = N(7)-methylguanosine(46) in tRNA + S-adenosyl-L-homocysteine. The protein operates within tRNA modification; N(7)-methylguanine-tRNA biosynthesis. Catalyzes the formation of N(7)-methylguanine at position 46 (m7G46) in tRNA. The protein is tRNA (guanine-N(7)-)-methyltransferase of Hyphomonas neptunium (strain ATCC 15444).